A 492-amino-acid chain; its full sequence is Probable endopolygalacturonase D (492 aa).

The first 16 residues, 1-16, serve as a signal peptide directing secretion; sequence MKRSALILSFLPLVFG. A disulfide bridge connects residues Cys-151 and Cys-166. PbH1 repeat units lie at residues 216–238, 258–280, 281–319, and 320–341; these read GTSVTITGVEGHVIDGNGAAYWD, MYNSRIENLYIQNWPVHCFEIES, TEHLTVSGLTLNNSAGDAANSKSDGDPAAHNSDGFDIKE, and SSYFTLENTWVHNQDDCVAVTS. Asn-292 is a glycosylation site (N-linked (GlcNAc...) asparagine). Residue Asp-334 is the Proton donor of the active site. The cysteines at positions 336 and 352 are disulfide-linked. The active site involves His-356. PbH1 repeat units lie at residues 371 to 392, 400 to 422, and 434 to 478; these read VNGVTFSNSQVISSQNGCRIKT, VYNIRYENITLSDISDYGIDVQQ, and TNGV…SITG. N-linked (GlcNAc...) asparagine glycans are attached at residues Asn-407 and Asn-441. 2 cysteine pairs are disulfide-bonded: Cys-461/Cys-466 and Cys-484/Cys-491.

Belongs to the glycosyl hydrolase 28 family.

It localises to the secreted. It carries out the reaction (1,4-alpha-D-galacturonosyl)n+m + H2O = (1,4-alpha-D-galacturonosyl)n + (1,4-alpha-D-galacturonosyl)m.. In terms of biological role, involved in maceration and soft-rotting of plant tissue. Hydrolyzes the 1,4-alpha glycosidic bonds of de-esterified pectate in the smooth region of the plant cell wall. This is Probable endopolygalacturonase D (pgaD) from Aspergillus oryzae (strain ATCC 42149 / RIB 40) (Yellow koji mold).